The chain runs to 545 residues: Lysine--tRNA ligase (545 aa).

The 'HIGH' region signature appears at 41–49 (PSGVPHLGH). A 'KMSKS' region motif is present at residues 306–310 (ALSSS).

It belongs to the class-I aminoacyl-tRNA synthetase family.

The protein resides in the cytoplasm. It carries out the reaction tRNA(Lys) + L-lysine + ATP = L-lysyl-tRNA(Lys) + AMP + diphosphate. This Natronomonas pharaonis (strain ATCC 35678 / DSM 2160 / CIP 103997 / JCM 8858 / NBRC 14720 / NCIMB 2260 / Gabara) (Halobacterium pharaonis) protein is Lysine--tRNA ligase.